The chain runs to 590 residues: Cytosolic Fe-S cluster assembly factor nar1 (590 aa).

Cysteine 20 is a binding site for [4Fe-4S] cluster. Residues 25–50 form a disordered region; it reads ESLPQKQSNENPYEVTTEDKVQPENP. Positions 60, 63, 66, 204, and 259 each coordinate [4Fe-4S] cluster. Residues 423 to 446 are disordered; it reads PGAKVATGQTAGGRRQPISRNGAS. Residues cysteine 461 and cysteine 465 each contribute to the [4Fe-4S] cluster site.

This sequence belongs to the NARF family.

Its function is as follows. Component of the cytosolic Fe/S protein assembly machinery. Required for maturation of extramitochondrial Fe/S proteins. May play a role in the transfer of pre-assembled Fe/S clusters to target apoproteins. This chain is Cytosolic Fe-S cluster assembly factor nar1 (nar1), found in Emericella nidulans (strain FGSC A4 / ATCC 38163 / CBS 112.46 / NRRL 194 / M139) (Aspergillus nidulans).